We begin with the raw amino-acid sequence, 354 residues long: Probable trehalose-phosphate phosphatase E (354 aa).

This sequence belongs to the trehalose phosphatase family. It depends on a divalent metal cation as a cofactor.

It catalyses the reaction alpha,alpha-trehalose 6-phosphate + H2O = alpha,alpha-trehalose + phosphate. It functions in the pathway glycan biosynthesis; trehalose biosynthesis. Functionally, removes the phosphate from trehalose 6-phosphate to produce free trehalose. Trehalose accumulation in plant may improve abiotic stress tolerance. This Arabidopsis thaliana (Mouse-ear cress) protein is Probable trehalose-phosphate phosphatase E (TPPE).